Consider the following 329-residue polypeptide: Oligopeptide transport ATP-binding protein AppF (329 aa).

The ABC transporter domain occupies 10 to 261; that stretch reads LELRDVKKYF…PLHPYTQALL (252 aa). 53–60 contacts ATP; the sequence is GESGCGKS.

Belongs to the ABC transporter superfamily.

It is found in the cell membrane. This protein is a component of an oligopeptide permease, a binding protein-dependent transport system. This APP system can completely substitute for the OPP system in both sporulation and genetic competence, though, unlike OPP, is incapable of transporting tripeptides. Probably responsible for energy coupling to the transport system. The chain is Oligopeptide transport ATP-binding protein AppF (appF) from Bacillus subtilis (strain 168).